Here is a 244-residue protein sequence, read N- to C-terminus: MKIDLNADLGEGYASDAELLTLVSSANIACGFHAGDAQTMQACVREAIKNGVAIGAHPSFPDRENFGRSAMQLPPETAFAQTLYQIGALAAIARAQGGVMRHVKPHGMLYNQAAKEAQLADAIARAVYACDPALILVGLAGSELIRAGKQYGLTTREEVFADRGYQADGSLVPRSQPGALIEDEEQALAQTLEMVQHGRVKSITGEWATVTAQTVCLHGDGEHALAFARRLRATFAEKGIVVAA.

It belongs to the LamB/PxpA family. Forms a complex composed of PxpA, PxpB and PxpC.

It carries out the reaction 5-oxo-L-proline + ATP + 2 H2O = L-glutamate + ADP + phosphate + H(+). Catalyzes the cleavage of 5-oxoproline to form L-glutamate coupled to the hydrolysis of ATP to ADP and inorganic phosphate. In Escherichia coli (strain SMS-3-5 / SECEC), this protein is 5-oxoprolinase subunit A.